The following is a 524-amino-acid chain: 11-oxo-beta-amyrin 30-oxidase (524 aa).

A helical membrane pass occupies residues 9-29 (GTTVIISVLSVLLAVIPWYLL). Cysteine 472 serves as a coordination point for heme.

It belongs to the cytochrome P450 family. Heme is required as a cofactor. Expressed in flowers. Detected in roots upon salt treatment.

The protein resides in the membrane. It catalyses the reaction 11-oxo-beta-amyrin + 3 reduced [NADPH--hemoprotein reductase] + 3 O2 = glycyrrhetinate + 3 oxidized [NADPH--hemoprotein reductase] + 4 H2O + 4 H(+). In terms of biological role, involved in the biosynthesis of triterpenoid saponins. Catalyzes three sequential oxidation steps at C-30 of 11-oxo-beta-amyrin. Also able to catalyze sequential C-30 hydroxylation of beta-amyrin to produce 30-hydroxy-beta-amyrin and 11-deoxoglycyrrhetinic acid. This Medicago truncatula (Barrel medic) protein is 11-oxo-beta-amyrin 30-oxidase (CYP72A63).